The primary structure comprises 249 residues: Probable aquaporin TIP-type (249 aa).

Helical transmembrane passes span 22–42 (AGLA…GSGI) and 56–76 (AGLI…VSVG). Residues 85–87 (NPA) carry the NPA 1 motif. The next 3 helical transmembrane spans lie at 103 to 123 (IVYI…LVFV), 137 to 157 (VGVG…VYTV), and 169 to 189 (IGII…LVGG). An NPA 2 motif is present at residues 197–199 (NPA). Residues 217–237 (YWAGPLIGGGIAGLVYEVLFI) form a helical membrane-spanning segment.

It belongs to the MIP/aquaporin (TC 1.A.8) family. TIP (TC 1.A.8.10) subfamily. Expression is highest in root tips, with slightly lower levels of hybridizing mRNA in stems, and whole roots, and much lower levels in nodules and leaves.

The protein localises to the membrane. In terms of biological role, aquaporins facilitate the transport of water and small neutral solutes across cell membranes. In Medicago sativa (Alfalfa), this protein is Probable aquaporin TIP-type (MCP1).